A 257-amino-acid chain; its full sequence is Protein-tyrosine-phosphatase IBR5 (257 aa).

A Tyrosine-protein phosphatase domain is found at 49 to 185 (FPSEILPEFL…LQEFEQGIFG (137 aa)). C129 (phosphocysteine intermediate) is an active-site residue. The tract at residues 235–257 (QEFTFGATPPKPTTGGDIAMDGS) is disordered.

The protein belongs to the protein-tyrosine phosphatase family. As to quaternary structure, interacts with SKP1A/ASK1 and with MPK12. As to expression, expressed in root tips and vasculature, cotyledons, stems, leaves vasculature and hydathodes, flowers, siliques, and seeds.

The protein localises to the nucleus. The catalysed reaction is O-phospho-L-tyrosyl-[protein] + H2O = L-tyrosyl-[protein] + phosphate. In terms of biological role, required for the transduction of auxin and abscisic acid (ABA) signaling pathways. Dephosphorylates and inactivates the MAP kinase MPK12. The chain is Protein-tyrosine-phosphatase IBR5 (IBR5) from Arabidopsis thaliana (Mouse-ear cress).